The primary structure comprises 135 residues: Transcriptional activator protein (135 aa).

Positions 17 to 32 (KVQHRAAKRKRIRRKR) match the Nuclear localization signal motif. The segment at 37 to 54 (CGCSYYVHINCHNHGFTH) is a zinc-finger region. Positions 77–115 (LFQDHSTRQQTVRNEPGHNNRPDTVQPQPEESVGTTSML) are disordered. The span at 98–114 (PDTVQPQPEESVGTTSM) shows a compositional bias: polar residues. The segment at 120–135 (GLDDLTASDLAFLEGI) is transactivation.

The protein belongs to the geminiviridae transcriptional activator protein family. As to quaternary structure, monomer. Homodimer. Homooligomer. Self-interaction correlates with nuclear localization and efficient activation of transcription. Monomers suppress local silencing by interacting with and inactivating host adenosine kinase 2 (ADK2) in the cytoplasm. Interacts with and inhibits host SNF1 kinase. Binds to ssDNA. In terms of processing, phosphorylated.

Its subcellular location is the host nucleus. It localises to the host cytoplasm. Functionally, strong activator of the late viral genes promoters. Enhances the expression of the capsid protein and nuclear shuttle protein. Acts as a suppressor of RNA-mediated gene silencing, also known as post-transcriptional gene silencing (PTGS), a mechanism of plant viral defense that limits the accumulation of viral RNAs. Suppresses the host RNA silencing by inhibiting adenosine kinase 2 (ADK2), a kinase involved in a general methylation pathway. Also suppresses the host basal defense by interacting with and inhibiting SNF1 kinase, a key regulator of cell metabolism implicated in innate antiviral defense. Determines pathogenicity. The polypeptide is Transcriptional activator protein (Indian cassava mosaic virus (ICMV)).